We begin with the raw amino-acid sequence, 281 residues long: Cytochrome bc1 complex cytochrome c subunit (281 aa).

The helical transmembrane segment at 17–37 (AAGAMALAVGLTGAGILVNAV) threads the bilayer. Cytochrome c domains lie at 52-132 (ALIQ…EANG) and 162-240 (ADVA…KSAK). Residues Cys65, Cys68, His69, Cys175, Cys178, and His179 each coordinate heme c. A helical transmembrane segment spans residues 259–279 (GMMMWLVGIVVLVAAAMWIGS).

In terms of assembly, the cytochrome bc1 complex is composed of a cytochrome b (QcrB), the Rieske iron-sulfur protein (QcrA) and a diheme cytochrome c (QcrC) subunit. The bc1 complex forms a supercomplex with cytochrome c oxidase (cytochrome aa3). Post-translationally, binds 2 heme c groups covalently per subunit.

It localises to the cell membrane. The catalysed reaction is a quinol + 2 Fe(III)-[cytochrome c](out) = a quinone + 2 Fe(II)-[cytochrome c](out) + 2 H(+)(out). In terms of biological role, cytochrome c1 subunit of the cytochrome bc1 complex, an essential component of the respiratory electron transport chain required for ATP synthesis. The bc1 complex catalyzes the oxidation of menaquinol and the reduction of cytochrome c in the respiratory chain. The bc1 complex operates through a Q-cycle mechanism that couples electron transfer to generation of the proton gradient that drives ATP synthesis. The polypeptide is Cytochrome bc1 complex cytochrome c subunit (qcrC) (Corynebacterium diphtheriae (strain ATCC 700971 / NCTC 13129 / Biotype gravis)).